A 290-amino-acid polypeptide reads, in one-letter code: Phosphoribulokinase (290 aa).

Residue 12–20 (GSSGAGTTS) coordinates ATP.

It belongs to the phosphoribulokinase family.

The catalysed reaction is D-ribulose 5-phosphate + ATP = D-ribulose 1,5-bisphosphate + ADP + H(+). It participates in carbohydrate biosynthesis; Calvin cycle. This Nitrobacter vulgaris protein is Phosphoribulokinase (cbbP).